The chain runs to 176 residues: Cytochrome c-552 (176 aa).

Residues 12–32 (GALIGSLLFLLLMSWAASGIF) traverse the membrane as a helical; Signal-anchor segment. 5 residues coordinate heme c: C90, C93, H94, M126, and M154.

Post-translationally, binds 1 heme c group covalently per subunit.

It is found in the cell membrane. Mediates the electron transport between the cytochrome bc1 complex and cytochrome-c oxidase. This Paracoccus denitrificans protein is Cytochrome c-552 (cycM).